Consider the following 192-residue polypeptide: Probable GTP-binding protein EngB (192 aa).

Residues 22-192 (SLPEIVFVGR…LLEQLENYTG (171 aa)) form the EngB-type G domain. Residues 30-37 (GRSNVGKS), 57-61 (GKTQL), 75-78 (DLPG), 142-145 (TKYD), and 172-174 (YSA) each bind GTP. Positions 37 and 59 each coordinate Mg(2+).

This sequence belongs to the TRAFAC class TrmE-Era-EngA-EngB-Septin-like GTPase superfamily. EngB GTPase family. Requires Mg(2+) as cofactor.

Its function is as follows. Necessary for normal cell division and for the maintenance of normal septation. The chain is Probable GTP-binding protein EngB from Prosthecochloris aestuarii (strain DSM 271 / SK 413).